Reading from the N-terminus, the 166-residue chain is uncharacterized protein (166 aa).

The residue at position 2 (Ala-2) is an N-acetylalanine.

As to quaternary structure, homodimer.

This is an uncharacterized protein from Arabidopsis thaliana (Mouse-ear cress).